The primary structure comprises 234 residues: UPF0173 metal-dependent hydrolase Smed_0942 (234 aa).

It belongs to the UPF0173 family.

The chain is UPF0173 metal-dependent hydrolase Smed_0942 from Sinorhizobium medicae (strain WSM419) (Ensifer medicae).